We begin with the raw amino-acid sequence, 346 residues long: Thioredoxin domain-containing protein R362 (346 aa).

A Thioredoxin domain is found at 212–345; it reads LTNLSNTEAN…IVKFIDETMS (134 aa).

The protein resides in the virion. The polypeptide is Thioredoxin domain-containing protein R362 (Acanthamoeba polyphaga (Amoeba)).